The chain runs to 122 residues: Large ribosomal subunit protein uL14c (122 aa).

Belongs to the universal ribosomal protein uL14 family. Part of the 50S ribosomal subunit.

Its subcellular location is the plastid. Binds to 23S rRNA. The polypeptide is Large ribosomal subunit protein uL14c (Cuscuta reflexa (Southern Asian dodder)).